Here is a 293-residue protein sequence, read N- to C-terminus: Elongation factor Ts (293 aa).

An involved in Mg(2+) ion dislocation from EF-Tu region spans residues 80-83 (TDFV).

This sequence belongs to the EF-Ts family.

The protein localises to the cytoplasm. Its function is as follows. Associates with the EF-Tu.GDP complex and induces the exchange of GDP to GTP. It remains bound to the aminoacyl-tRNA.EF-Tu.GTP complex up to the GTP hydrolysis stage on the ribosome. The chain is Elongation factor Ts from Burkholderia ambifaria (strain MC40-6).